The primary structure comprises 377 residues: N-acetylgalactosamine-6-phosphate deacetylase (377 aa).

Position 125 (Glu125) interacts with a divalent metal cation. A substrate-binding site is contributed by 136-137 (AH). Positions 191 and 212 each coordinate a divalent metal cation. Substrate contacts are provided by residues 215–216 (NG), Arg223, and 244–247 (DGHH). The active-site Proton donor/acceptor is the Asp269. 302-304 (LAG) is a binding site for substrate.

It belongs to the metallo-dependent hydrolases superfamily. NagA family. It depends on a divalent metal cation as a cofactor.

It catalyses the reaction N-acetyl-D-galactosamine 6-phosphate + H2O = D-galactosamine 6-phosphate + acetate. In terms of biological role, catalyzes the deacetylation of N-acetyl-D-galactosamine 6-phosphate to D-galactosamine 6-phosphate. Can probably also catalyze the deacetylation of N-acetyl-D-glucosamine 6-phosphate to D-glucosamine 6-phosphate. This is N-acetylgalactosamine-6-phosphate deacetylase (agaA) from Escherichia coli O157:H7.